A 197-amino-acid polypeptide reads, in one-letter code: MVGPEIERLIQLLSRLPGLGPRSARRAALRLVEKRESLLVPLAQAMADAAARVRTCSVCGNFDTIDPCAICADHRRDPSMLCVVEDVAGLWAMERTGSFKGRYAVLGGLLSALDGVGPEDLGIESLVARALDPAITEIILATPATVEGQTTAHYVAERLAPCNVTVSGLAHGVPVGGELDHLDDGTITAALRARRVF.

The C4-type zinc-finger motif lies at cysteine 56–cysteine 71. One can recognise a Toprim domain in the interval serine 79–proline 174.

The protein belongs to the RecR family.

May play a role in DNA repair. It seems to be involved in an RecBC-independent recombinational process of DNA repair. It may act with RecF and RecO. The polypeptide is Recombination protein RecR (Paramagnetospirillum magneticum (strain ATCC 700264 / AMB-1) (Magnetospirillum magneticum)).